Reading from the N-terminus, the 114-residue chain is Iron-sulfur cluster insertion protein ErpA (114 aa).

C42, C106, and C108 together coordinate iron-sulfur cluster.

The protein belongs to the HesB/IscA family. Homodimer. Iron-sulfur cluster serves as cofactor.

Its function is as follows. Required for insertion of 4Fe-4S clusters for at least IspG. This Yersinia enterocolitica serotype O:8 / biotype 1B (strain NCTC 13174 / 8081) protein is Iron-sulfur cluster insertion protein ErpA.